Here is a 299-residue protein sequence, read N- to C-terminus: 4-diphosphocytidyl-2-C-methyl-D-erythritol kinase (299 aa).

Lys17 is an active-site residue. ATP is bound at residue 103-113; it reads PVASGIGGGSG. Asp145 is an active-site residue.

It belongs to the GHMP kinase family. IspE subfamily.

It catalyses the reaction 4-CDP-2-C-methyl-D-erythritol + ATP = 4-CDP-2-C-methyl-D-erythritol 2-phosphate + ADP + H(+). It functions in the pathway isoprenoid biosynthesis; isopentenyl diphosphate biosynthesis via DXP pathway; isopentenyl diphosphate from 1-deoxy-D-xylulose 5-phosphate: step 3/6. Functionally, catalyzes the phosphorylation of the position 2 hydroxy group of 4-diphosphocytidyl-2C-methyl-D-erythritol. This Bartonella tribocorum (strain CIP 105476 / IBS 506) protein is 4-diphosphocytidyl-2-C-methyl-D-erythritol kinase.